The sequence spans 178 residues: 2-C-methyl-D-erythritol 2,4-cyclodiphosphate synthase (178 aa).

Asp24, His26, and His61 together coordinate a divalent metal cation. 24-26 (DSH) is a 4-CDP-2-C-methyl-D-erythritol 2-phosphate binding site. 150-153 (TSGE) serves as a coordination point for 4-CDP-2-C-methyl-D-erythritol 2-phosphate.

Belongs to the IspF family. As to quaternary structure, homotrimer. A divalent metal cation is required as a cofactor.

The catalysed reaction is 4-CDP-2-C-methyl-D-erythritol 2-phosphate = 2-C-methyl-D-erythritol 2,4-cyclic diphosphate + CMP. It functions in the pathway isoprenoid biosynthesis; isopentenyl diphosphate biosynthesis via DXP pathway; isopentenyl diphosphate from 1-deoxy-D-xylulose 5-phosphate: step 4/6. Its function is as follows. Involved in the biosynthesis of isopentenyl diphosphate (IPP) and dimethylallyl diphosphate (DMAPP), two major building blocks of isoprenoid compounds. Catalyzes the conversion of 4-diphosphocytidyl-2-C-methyl-D-erythritol 2-phosphate (CDP-ME2P) to 2-C-methyl-D-erythritol 2,4-cyclodiphosphate (ME-CPP) with a corresponding release of cytidine 5-monophosphate (CMP). The protein is 2-C-methyl-D-erythritol 2,4-cyclodiphosphate synthase of Chlamydia trachomatis serovar A (strain ATCC VR-571B / DSM 19440 / HAR-13).